A 679-amino-acid chain; its full sequence is MASGAPDGKWKVVKKGKKSGERREGERKALTESNVTPGGTAPIKMANTVYEMGFDRIHKKQNKEQVPPNNMSSEQPQKQQQNPGKKKPQSGDSVCKQSKFHTLECALKALDVAELQRDLEKSQNMFPENPSIWVKDLAGYLNYKLQTVKNDVLIQQSHDYPYCLINKELKGIVRSLLAKAPHVLDVMVDHCIFSMLQELDKPTGESLHGYRICIQAVLLDKPKTVTSNLPKYLELLRSHLNRPMKCLTVMWAVGQAGFTDFTEGLKVWLGLMFPVLGVKNLTPYAILYLDRLLLAHSNLTKGFGMIGPKDFFPILDFAFMPNNSLTPSQQENLRNLYPKLKVLALGATPESTLHTYFPSFLSRATPSCPAEMRKELIHSLTDCLNKDSLSFSVWRQLYTKHLSQSSLLLQHLVETWDSNSRAMRKSVRETVHSFKVTNGEFSGKGSSSKDLEACDAACQALLHKMKSGGFPWWRLIVIAFVFLFGSVLYDVRTHNSFQESTSAQILQQSGLLSVSREAWNKVSNYSLQGQSWLERNVPQYYSQAVEVLGPVLEQVWAKTQEGGAYACEKGSVLLSYAKDNLPRLIEWLHSSIPDSVFQFIEYLRELLLHLHQTYLLPAVTYLEAAVQNSWQQYVKSCNGKVTWDCVRGQVGNISHSSWTYLQNTTMTFTNWALTIISRH.

Positions 1–94 (MASGAPDGKW…KKKPQSGDSV (94 aa)) are disordered. The span at 18 to 30 (KSGERREGERKAL) shows a compositional bias: basic and acidic residues. 3 N-linked (GlcNAc...) asparagine glycosylation sites follow: Asn-70, Asn-298, and Asn-322. 2 consecutive transmembrane segments (helical) span residues 468-488 (GGFP…GSVL) and 606-626 (LLLH…EAAV).

It belongs to the TMEM214 family. Constitutively interacts with CASP4; required for the localization of procaspase 4 to the ER.

It localises to the endoplasmic reticulum membrane. Its function is as follows. Critical mediator, in cooperation with CASP4, of endoplasmic reticulum-stress induced apoptosis. Required or the activation of CASP4 following endoplasmic reticulum stress. The sequence is that of Transmembrane protein 214-B (tmem214-b) from Xenopus laevis (African clawed frog).